We begin with the raw amino-acid sequence, 256 residues long: Pimeloyl-[acyl-carrier protein] methyl ester esterase (256 aa).

In terms of domain architecture, AB hydrolase-1 spans 15-242 (HLVLLHGWGL…AAHAPFISHP (228 aa)). Substrate is bound by residues Trp22, 82–83 (SL), and 143–147 (FLALQ). Ser82 serves as the catalytic Nucleophile. Residues Asp207 and His235 contribute to the active site. His235 contacts substrate.

This sequence belongs to the AB hydrolase superfamily. Carboxylesterase BioH family. As to quaternary structure, monomer.

The protein localises to the cytoplasm. The catalysed reaction is 6-carboxyhexanoyl-[ACP] methyl ester + H2O = 6-carboxyhexanoyl-[ACP] + methanol + H(+). It participates in cofactor biosynthesis; biotin biosynthesis. The physiological role of BioH is to remove the methyl group introduced by BioC when the pimeloyl moiety is complete. It allows to synthesize pimeloyl-ACP via the fatty acid synthetic pathway through the hydrolysis of the ester bonds of pimeloyl-ACP esters. The sequence is that of Pimeloyl-[acyl-carrier protein] methyl ester esterase from Escherichia coli O6:H1 (strain CFT073 / ATCC 700928 / UPEC).